Consider the following 472-residue polypeptide: Glutamyl-tRNA(Gln) amidotransferase subunit A (472 aa).

Catalysis depends on charge relay system residues lysine 69 and serine 144. Serine 168 serves as the catalytic Acyl-ester intermediate.

The protein belongs to the amidase family. GatA subfamily. Heterotrimer of A, B and C subunits.

It catalyses the reaction L-glutamyl-tRNA(Gln) + L-glutamine + ATP + H2O = L-glutaminyl-tRNA(Gln) + L-glutamate + ADP + phosphate + H(+). In terms of biological role, allows the formation of correctly charged Gln-tRNA(Gln) through the transamidation of misacylated Glu-tRNA(Gln) in organisms which lack glutaminyl-tRNA synthetase. The reaction takes place in the presence of glutamine and ATP through an activated gamma-phospho-Glu-tRNA(Gln). The protein is Glutamyl-tRNA(Gln) amidotransferase subunit A of Sulfurisphaera tokodaii (strain DSM 16993 / JCM 10545 / NBRC 100140 / 7) (Sulfolobus tokodaii).